The sequence spans 134 residues: uncharacterized protein (134 aa).

The protein belongs to the orthopoxviruses B21 protein family.

This is an uncharacterized protein from Bos taurus (Bovine).